Reading from the N-terminus, the 59-residue chain is Large ribosomal subunit protein bL32 (59 aa).

A disordered region spans residues 1-59; the sequence is MAVQQNRKTRSKRGMRRSHDALSAAALSTDATTGEVHRRHHVSPDGFYRGKQVVEARDE. Positions 7–16 are enriched in basic residues; the sequence is RKTRSKRGMR. Residues 21–33 show a composition bias toward low complexity; sequence ALSAAALSTDATT.

It belongs to the bacterial ribosomal protein bL32 family.

This Marinobacter nauticus (strain ATCC 700491 / DSM 11845 / VT8) (Marinobacter aquaeolei) protein is Large ribosomal subunit protein bL32.